The chain runs to 71 residues: Brevinin-1SN1 (71 aa).

An N-terminal signal peptide occupies residues 1–22; sequence MFTMKKPLLLLFFLGTINLSLC. The propeptide at 23-45 is removed in mature form; the sequence is EEERNADEEEKRDGDDEMDAEVE. An intrachain disulfide couples Cys-65 to Cys-71.

This sequence belongs to the frog skin active peptide (FSAP) family. Brevinin subfamily. As to expression, expressed by the skin glands.

Its subcellular location is the secreted. Functionally, antimicrobial peptide. Active against some Gram-negative and a variety of Gram-positive bacterial strains. Active against fungus C.glabrata 090902 but not against C.albicans ATCC 10231. Shows hemolytic activity against human erythrocytes. The sequence is that of Brevinin-1SN1 from Sylvirana spinulosa (Fine-spined frog).